Reading from the N-terminus, the 251-residue chain is Triosephosphate isomerase (251 aa).

9-11 serves as a coordination point for substrate; that stretch reads NWK. The Electrophile role is filled by H94. Catalysis depends on E167, which acts as the Proton acceptor. Substrate is bound by residues G173, S213, and 234-235; that span reads GG.

Belongs to the triosephosphate isomerase family. In terms of assembly, homodimer.

The protein resides in the cytoplasm. It catalyses the reaction D-glyceraldehyde 3-phosphate = dihydroxyacetone phosphate. It functions in the pathway carbohydrate biosynthesis; gluconeogenesis. Its pathway is carbohydrate degradation; glycolysis; D-glyceraldehyde 3-phosphate from glycerone phosphate: step 1/1. In terms of biological role, involved in the gluconeogenesis. Catalyzes stereospecifically the conversion of dihydroxyacetone phosphate (DHAP) to D-glyceraldehyde-3-phosphate (G3P). The polypeptide is Triosephosphate isomerase (Finegoldia magna (strain ATCC 29328 / DSM 20472 / WAL 2508) (Peptostreptococcus magnus)).